A 307-amino-acid chain; its full sequence is Ribosomal RNA small subunit methyltransferase H (307 aa).

Residues 32-34 (AGH), Asp-51, Ile-82, Asp-99, and Gln-106 each bind S-adenosyl-L-methionine.

This sequence belongs to the methyltransferase superfamily. RsmH family.

The protein localises to the cytoplasm. The catalysed reaction is cytidine(1402) in 16S rRNA + S-adenosyl-L-methionine = N(4)-methylcytidine(1402) in 16S rRNA + S-adenosyl-L-homocysteine + H(+). Specifically methylates the N4 position of cytidine in position 1402 (C1402) of 16S rRNA. The protein is Ribosomal RNA small subunit methyltransferase H of Campylobacter concisus (strain 13826).